Here is a 193-residue protein sequence, read N- to C-terminus: Mediator of RNA polymerase II transcription subunit 30 (193 aa).

Positions 1 to 20 (MSTPPLAASGMAPGPFAGPQ) are disordered. Position 2 is an N-acetylserine (serine 2). Low complexity predominate over residues 10 to 20 (GMAPGPFAGPQ). A coiled-coil region spans residues 71–93 (YQDRLAKLQDHLRQLSILFRKLR).

The protein belongs to the Mediator complex subunit 30 family. As to quaternary structure, component of the Mediator complex, which is composed of MED1, MED4, MED6, MED7, MED8, MED9, MED10, MED11, MED12, MED13, MED13L, MED14, MED15, MED16, MED17, MED18, MED19, MED20, MED21, MED22, MED23, MED24, MED25, MED26, MED27, MED29, MED30, MED31, CCNC, CDK8 and CDC2L6/CDK11. The MED12, MED13, CCNC and CDK8 subunits form a distinct module termed the CDK8 module. Mediator containing the CDK8 module is less active than Mediator lacking this module in supporting transcriptional activation. Individual preparations of the Mediator complex lacking one or more distinct subunits have been variously termed ARC, CRSP, DRIP, PC2, SMCC and TRAP.

Its subcellular location is the nucleus. Component of the Mediator complex, a coactivator involved in the regulated transcription of nearly all RNA polymerase II-dependent genes. Mediator functions as a bridge to convey information from gene-specific regulatory proteins to the basal RNA polymerase II transcription machinery. Mediator is recruited to promoters by direct interactions with regulatory proteins and serves as a scaffold for the assembly of a functional preinitiation complex with RNA polymerase II and the general transcription factors. In Bos taurus (Bovine), this protein is Mediator of RNA polymerase II transcription subunit 30 (MED30).